Consider the following 286-residue polypeptide: Protein Bride of doubletime (286 aa).

In terms of assembly, interacts with dco (via nuclear localization signal). Interacts with Ankrd49; interaction promotes the stability of both complex members.

The protein resides in the cytoplasm. It is found in the cytosol. Its subcellular location is the cell membrane. Functionally, functions in planar polarity establishment and circadian rhythms by promoting the activity and localization of dco/dbt. Required for regulating the levels of dco/dbt and per in the nuclei of photoreceptor cells and thereby is involved in normal oscillations of the circadian clock proteins in the eye. In the dark, the cry circadian and rhodopsin visual pathways, activate the accumulation of the protein into Arr1- and Arr2-dependent cytosolic foci which are required for dco localization to photoreceptor nuclei. It is possible that the accumulation into foci results in the dissociation of the protein from dco, thus allowing dco to interact with importins and microtubles for nuclear transport. By promoting nuclei localization and kinase activity of dco towards per, it is essential for regulating normal cycles of per nuclear accumulation in brain circadian neurons and thus is important for normal circadian behavior. Essential for regulating the establishment of planar cell polarity in the wing. Forms a complex with Ankrd49 which likely functions in the regulation of planar polarity by promoting the activity of dco during planar polarity establishment. Within the complex, directly promotes dco activity in regulating phosphorylation and asymmetric localization of core planar polarity proteins such as dsh. This chain is Protein Bride of doubletime, found in Drosophila melanogaster (Fruit fly).